The sequence spans 317 residues: Acetyl-coenzyme A carboxylase carboxyl transferase subunit alpha (317 aa).

A CoA carboxyltransferase C-terminal domain is found at 39–293; the sequence is RLESRVNDAM…GDVIAKALAD (255 aa).

The protein belongs to the AccA family. As to quaternary structure, acetyl-CoA carboxylase is a heterohexamer composed of biotin carboxyl carrier protein (AccB), biotin carboxylase (AccC) and two subunits each of ACCase subunit alpha (AccA) and ACCase subunit beta (AccD).

The protein resides in the cytoplasm. The enzyme catalyses N(6)-carboxybiotinyl-L-lysyl-[protein] + acetyl-CoA = N(6)-biotinyl-L-lysyl-[protein] + malonyl-CoA. Its pathway is lipid metabolism; malonyl-CoA biosynthesis; malonyl-CoA from acetyl-CoA: step 1/1. In terms of biological role, component of the acetyl coenzyme A carboxylase (ACC) complex. First, biotin carboxylase catalyzes the carboxylation of biotin on its carrier protein (BCCP) and then the CO(2) group is transferred by the carboxyltransferase to acetyl-CoA to form malonyl-CoA. The polypeptide is Acetyl-coenzyme A carboxylase carboxyl transferase subunit alpha (Agrobacterium fabrum (strain C58 / ATCC 33970) (Agrobacterium tumefaciens (strain C58))).